The sequence spans 282 residues: Phosphatidylglycerol--prolipoprotein diacylglyceryl transferase (282 aa).

3 helical membrane-spanning segments follow: residues 19–39 (IGPF…VFGW), 58–78 (ISLV…ILGG), and 104–124 (GGMS…WFAY). An a 1,2-diacyl-sn-glycero-3-phospho-(1'-sn-glycerol)-binding site is contributed by Arg-149. Transmembrane regions (helical) follow at residues 190-210 (AGME…LGAL), 214-234 (GMIL…GEHF), and 250-270 (MGML…VLAI).

This sequence belongs to the Lgt family.

The protein resides in the cell inner membrane. The catalysed reaction is L-cysteinyl-[prolipoprotein] + a 1,2-diacyl-sn-glycero-3-phospho-(1'-sn-glycerol) = an S-1,2-diacyl-sn-glyceryl-L-cysteinyl-[prolipoprotein] + sn-glycerol 1-phosphate + H(+). It participates in protein modification; lipoprotein biosynthesis (diacylglyceryl transfer). Catalyzes the transfer of the diacylglyceryl group from phosphatidylglycerol to the sulfhydryl group of the N-terminal cysteine of a prolipoprotein, the first step in the formation of mature lipoproteins. In Bradyrhizobium diazoefficiens (strain JCM 10833 / BCRC 13528 / IAM 13628 / NBRC 14792 / USDA 110), this protein is Phosphatidylglycerol--prolipoprotein diacylglyceryl transferase.